Here is a 122-residue protein sequence, read N- to C-terminus: Prefoldin subunit 1 (122 aa).

At Ala2 the chain carries N-acetylalanine.

It belongs to the prefoldin subunit beta family. As to quaternary structure, heterohexamer of two PFD-alpha type and four PFD-beta type subunits.

Binds specifically to cytosolic chaperonin (c-CPN) and transfers target proteins to it. Binds to nascent polypeptide chain and promotes folding in an environment in which there are many competing pathways for nonnative proteins. This is Prefoldin subunit 1 (Pfdn1) from Mus musculus (Mouse).